The following is a 420-amino-acid chain: Napsin-A (420 aa).

The N-terminal stretch at 1–25 (MSPPPLLQPLLLLLPLLNVEPSGAT) is a signal peptide. Residues 26–63 (LIRIPLHRVQPGRRILNLLRGWREPAELPKLGAPSPGD) constitute a propeptide, activation peptide. The 322-residue stretch at 78-399 (YFGEIGLGTP…MKSSARVGLA (322 aa)) folds into the Peptidase A1 domain. Residue Asn90 is glycosylated (N-linked (GlcNAc...) asparagine). The active site involves Asp96. Residues Cys109 and Cys116 are joined by a disulfide bond. The N-linked (GlcNAc...) asparagine glycan is linked to Asn133. Cys274 and Cys278 are oxidised to a cystine. Asp283 is a catalytic residue. A disulfide bridge connects residues Cys317 and Cys354. An N-linked (GlcNAc...) asparagine glycan is attached at Asn336.

Belongs to the peptidase A1 family. As to expression, expressed predominantly in adult lung (type II pneumocytes) and kidney and in fetal lung. Low levels in adult spleen and very low levels in peripheral blood leukocytes.

It localises to the secreted. In terms of biological role, may be involved in processing of pneumocyte surfactant precursors. This Homo sapiens (Human) protein is Napsin-A (NAPSA).